The following is a 792-amino-acid chain: Zinc finger protein 606 (792 aa).

Residues 62 to 133 (VTFKDVAVDF…EQACPQRTCP (72 aa)) enclose the KRAB domain. The segment at 289-311 (FKCTDAVKSFNHIIHFGDHKGIH) adopts a C2H2-type 1; degenerate zinc-finger fold. A C2H2-type 2; degenerate zinc finger spans residues 317-344 (YEYKECHQIFNQSPSFNEHPRLHVGENQ). Residues 400 to 422 (YDYNECGTSFIWSSYLIQHKKTH) form a C2H2-type 3; degenerate zinc finger. 13 consecutive C2H2-type zinc fingers follow at residues 428–450 (YECD…ERTH), 456–478 (YECN…KRIH), 484–506 (YVCN…QRTH), 512–534 (FECT…MRMH), 540–562 (FKCD…ERTH), 568–590 (YKCT…QRTH), 596–618 (YNCQ…EIIH), 624–646 (YECN…QRTH), 652–674 (YECN…RRIH), 680–702 (YKCN…RRTH), 708–730 (YRCN…LRNH), 736–758 (YKCN…QRMH), and 764–786 (FICS…QRNH).

Belongs to the krueppel C2H2-type zinc-finger protein family. As to expression, widely expressed in adult and fetal tissues.

It localises to the nucleus. In terms of biological role, may act as a transcriptional repressor. The chain is Zinc finger protein 606 (ZNF606) from Homo sapiens (Human).